The sequence spans 939 residues: Translation initiation factor IF-2 (939 aa).

Residues 81-94 (EEQSRKAYEKEQQL) show a composition bias toward basic and acidic residues. Disordered regions lie at residues 81–303 (EEQS…KKVE) and 316–337 (TISG…KMRR). The segment covering 99–108 (SSAPSPAPAA) has biased composition (low complexity). Basic and acidic residues-rich tracts occupy residues 112-127 (EPVK…RHEP) and 148-173 (SPKE…EKAA). Low complexity predominate over residues 178–189 (EAQPEAQSQQEP). A compositionally biased stretch (basic and acidic residues) spans 244–255 (FKENAAELKDEF). Over residues 276 to 287 (AAGEGESTTGGE) the composition is skewed to low complexity. Residues 292 to 301 (KKKKGKKKKK) are compositionally biased toward basic residues. The segment covering 318-328 (SGMDDSGSSGS) has biased composition (low complexity). Residues 436–606 (TRPPVVTIMG…LTEAEVRELK (171 aa)) form the tr-type G domain. Residues 445 to 452 (GHVDHGKT) form a G1 region. 445–452 (GHVDHGKT) is a GTP binding site. Residues 470 to 474 (GITQH) form a G2 region. The G3 stretch occupies residues 492-495 (DTPG). Residues 492–496 (DTPGH) and 546–549 (NKID) contribute to the GTP site. The segment at 546–549 (NKID) is G4. A G5 region spans residues 582 to 584 (SAK).

Belongs to the TRAFAC class translation factor GTPase superfamily. Classic translation factor GTPase family. IF-2 subfamily.

The protein resides in the cytoplasm. Functionally, one of the essential components for the initiation of protein synthesis. Protects formylmethionyl-tRNA from spontaneous hydrolysis and promotes its binding to the 30S ribosomal subunits. Also involved in the hydrolysis of GTP during the formation of the 70S ribosomal complex. This is Translation initiation factor IF-2 from Chlorobaculum parvum (strain DSM 263 / NCIMB 8327) (Chlorobium vibrioforme subsp. thiosulfatophilum).